A 105-amino-acid chain; its full sequence is Small ribosomal subunit protein bS6 (105 aa).

It belongs to the bacterial ribosomal protein bS6 family.

Binds together with bS18 to 16S ribosomal RNA. The polypeptide is Small ribosomal subunit protein bS6 (Lawsonia intracellularis (strain PHE/MN1-00)).